The following is a 96-amino-acid chain: Large ribosomal subunit protein uL23 (96 aa).

The protein belongs to the universal ribosomal protein uL23 family. As to quaternary structure, part of the 50S ribosomal subunit. Contacts protein L29, and trigger factor when it is bound to the ribosome.

One of the early assembly proteins it binds 23S rRNA. One of the proteins that surrounds the polypeptide exit tunnel on the outside of the ribosome. Forms the main docking site for trigger factor binding to the ribosome. The polypeptide is Large ribosomal subunit protein uL23 (Desulfovibrio desulfuricans (strain ATCC 27774 / DSM 6949 / MB)).